The chain runs to 428 residues: Kynureninase (428 aa).

Residues T104, T105, 132-135 (FPSD), D213, H216, and Y238 each bind pyridoxal 5'-phosphate. At K239 the chain carries N6-(pyridoxal phosphate)lysine. Residues W267 and T295 each contribute to the pyridoxal 5'-phosphate site.

The protein belongs to the kynureninase family. As to quaternary structure, homodimer. Requires pyridoxal 5'-phosphate as cofactor.

The catalysed reaction is L-kynurenine + H2O = anthranilate + L-alanine + H(+). It catalyses the reaction 3-hydroxy-L-kynurenine + H2O = 3-hydroxyanthranilate + L-alanine + H(+). Its pathway is amino-acid degradation; L-kynurenine degradation; L-alanine and anthranilate from L-kynurenine: step 1/1. It functions in the pathway cofactor biosynthesis; NAD(+) biosynthesis; quinolinate from L-kynurenine: step 2/3. Functionally, catalyzes the cleavage of L-kynurenine (L-Kyn) and L-3-hydroxykynurenine (L-3OHKyn) into anthranilic acid (AA) and 3-hydroxyanthranilic acid (3-OHAA), respectively. The polypeptide is Kynureninase (Bacillus cereus (strain ATCC 10987 / NRS 248)).